Here is a 252-residue protein sequence, read N- to C-terminus: MAATSLVGICRRASAFLKAACSLVNPKDAAHSGCRSSLSLLHKNTPHVTSFLQCKLLHTTLSRKGLEEFFDDPKNWGEEKVKSGASWTCQQLRNKSNEDLHKLWYVLLKERNMLLTLEQEAKRQRLPMPSPERLEKVVDSMDNVDKVVQEREDALRLLQTGQEKPRPGAWRRDIFGRIVWHKFKQWPIPWYLNKRYNRRRFFAMPYVDRFIRLRIEKHARIEARKRSLQKKKEKILHAKFPHLSQERKSSSV.

N6-acetyllysine is present on Lys-146. The span at 230 to 240 (KKKEKILHAKF) shows a compositional bias: basic residues. Residues 230-252 (KKKEKILHAKFPHLSQERKSSSV) are disordered.

The protein belongs to the universal ribosomal protein uL29 family. Component of the mitochondrial ribosome large subunit (39S) which comprises a 16S rRNA and about 50 distinct proteins.

Its subcellular location is the mitochondrion. The polypeptide is Large ribosomal subunit protein uL29m (Mrpl47) (Mus musculus (Mouse)).